The sequence spans 347 residues: MAENIIEIKNVYKEFNGVPILKDINLNIKKNEFLTLLGPSGCGKTTTLRILGGFEDATNGEVIFEGKKINDVPPYKRQINTVFQKYALFPHMSIFENIAFGLNIKKVPKDQIKTRVKRMLKLVDLEGYENRSIDSLSGGQQQRIAIARALVNEPKVLLLDEPLGALDLKLRKEMQIELKKMQKQLGITFIYVTHDQDEALTMSDKIVVMDKGEIQQMGTPEDIYNEPKNAFVAKFIGASNIVDGIMIEDFLVDFAGRKFECVDKGFEPNEDIQVVVRPEDIKIVDKDKGMLEGVVESETFKGVHYEMIVKENDREWLVHSTLKSEVGTVVGMNIFPEDIHIMKKVSD.

The ABC transporter domain occupies 6–236; sequence IEIKNVYKEF…PKNAFVAKFI (231 aa). ATP is bound at residue 38-45; sequence GPSGCGKT.

Belongs to the ABC transporter superfamily. Spermidine/putrescine importer (TC 3.A.1.11.1) family. The complex is composed of two ATP-binding proteins (PotA), two transmembrane proteins (PotB and PotC) and a solute-binding protein (PotD).

It localises to the cell membrane. It carries out the reaction ATP + H2O + polyamine-[polyamine-binding protein]Side 1 = ADP + phosphate + polyamineSide 2 + [polyamine-binding protein]Side 1.. Its function is as follows. Part of the ABC transporter complex PotABCD involved in spermidine/putrescine import. Responsible for energy coupling to the transport system. In Clostridium novyi (strain NT), this protein is Spermidine/putrescine import ATP-binding protein PotA.